A 470-amino-acid chain; its full sequence is MATFMTEDFLLKNDIARTLYHKYAAPMPIYDFHCHLSPQEIADDRRFDNLGQIWLEGDHYKWRALRSAGVDESLITGKETSDYEKYMAWANTVPKTLGNPLYHWTHLELRRPFGITGTLFGPDTAESIWTQCNEKLATPAFSARGIMQQMNVRMVGTTDDPIDSLEYHRQIAADDSIDIEVAPSWRPDKVFKIELDGFVDYLGKLEAAADVSITRFDDLRQALTRRLDHFAACGCRASDHGIETLRFAPVPDDAQLDAILGKRLAGETLSELEIAQFTTAVLVWLGRQYAARGWVMQLHIGAIRNNNTRMFRLLGPDTGFDSIGDNNISWALSRLLDSMDVTNELPKTILYCLNPRDNEVLATMIGNFQGPGIAGKVQFGSGWWFNDQKDGMLRQLEQLSQMGLLSQFVGMLTDSRSFLSYTRHEYFRRILCNLLGQWAQDGEIPDDEAMLSRMVQDICFNNAQRYFTIK.

It belongs to the metallo-dependent hydrolases superfamily. Uronate isomerase family.

The catalysed reaction is D-glucuronate = D-fructuronate. It catalyses the reaction aldehydo-D-galacturonate = keto-D-tagaturonate. The protein operates within carbohydrate metabolism; pentose and glucuronate interconversion. The protein is Uronate isomerase of Salmonella newport (strain SL254).